Consider the following 347-residue polypeptide: Quinolinate synthase (347 aa).

Iminosuccinate is bound by residues histidine 47 and serine 68. Cysteine 113 is a [4Fe-4S] cluster binding site. Iminosuccinate contacts are provided by residues 139-141 (YAN) and serine 156. Cysteine 200 is a binding site for [4Fe-4S] cluster. Residues 226-228 (HPE) and threonine 243 contribute to the iminosuccinate site. Position 297 (cysteine 297) interacts with [4Fe-4S] cluster.

The protein belongs to the quinolinate synthase family. Type 1 subfamily. The cofactor is [4Fe-4S] cluster.

It localises to the cytoplasm. The enzyme catalyses iminosuccinate + dihydroxyacetone phosphate = quinolinate + phosphate + 2 H2O + H(+). The protein operates within cofactor biosynthesis; NAD(+) biosynthesis; quinolinate from iminoaspartate: step 1/1. Catalyzes the condensation of iminoaspartate with dihydroxyacetone phosphate to form quinolinate. The chain is Quinolinate synthase from Salmonella paratyphi A (strain ATCC 9150 / SARB42).